Consider the following 463-residue polypeptide: Asparagine--tRNA ligase (463 aa).

The protein belongs to the class-II aminoacyl-tRNA synthetase family. In terms of assembly, homodimer.

It is found in the cytoplasm. The enzyme catalyses tRNA(Asn) + L-asparagine + ATP = L-asparaginyl-tRNA(Asn) + AMP + diphosphate + H(+). This chain is Asparagine--tRNA ligase, found in Bacillus cereus (strain ATCC 10987 / NRS 248).